We begin with the raw amino-acid sequence, 605 residues long: Formin-binding protein 1-like (605 aa).

In terms of domain architecture, F-BAR spans 1 to 263; it reads MSWGTELWDQ…AAKSVDERRD (263 aa). Residues 66-258 adopt a coiled-coil conformation; it reads FTSCVAFFNI…EGMILAAKSV (193 aa). An interaction with CDC42 region spans residues 245 to 535; sequence SKCLEGMILA…EFDDEFEDDD (291 aa). Ser295 carries the phosphoserine modification. A coiled-coil region spans residues 392–484; the sequence is LEDFSHLPPE…VEGKTGGRGD (93 aa). The region spanning 397 to 474 is the REM-1 domain; the sequence is HLPPEQRRKK…IHKNEAWLSE (78 aa). Residues 476-490 are compositionally biased toward basic and acidic residues; that stretch reads EGKTGGRGDRRHSSD. Residues 476 to 539 are disordered; it reads EGKTGGRGDR…EFEDDDPLPA (64 aa). Phosphoserine is present on residues Ser488, Ser501, and Ser505. Residues 522–605 are interaction with DNM1; the sequence is GHHNEFDDEF…VTLEKNSKGS (84 aa). A compositionally biased stretch (acidic residues) spans 527–536; that stretch reads FDDEFEDDDP. The region spanning 538–599 is the SH3 domain; that stretch reads PAIGHCKAIY…PTSYIDVTLE (62 aa). Positions 541 to 597 are interaction with DNM2 and WASL; it reads GHCKAIYPFDGHNEGTLAMKEGEVLYIIEEDKGDGWTRARRQNGEEGYVPTSYIDVT. An interaction with DAAM1, DIAPH1 and DIAPH2 region spans residues 541–605; that stretch reads GHCKAIYPFD…VTLEKNSKGS (65 aa).

Belongs to the FNBP1 family. As to quaternary structure, homodimerizes, the dimers can polymerize end-to-end to form filamentous structures. Interacts with GTP-bound CDC42. Interacts with DAAM1, DIAPH1, DIAPH2, DNM1, DNM2 and WASL/N-WASP. Interacts with ATG3. Interacts (via SH3 domain) with ABI1, WASF2, CDC42 and WIPF1.

It localises to the cytoplasm. The protein resides in the cytoskeleton. The protein localises to the cell cortex. Its subcellular location is the cytoplasmic vesicle. It is found in the cell membrane. Its function is as follows. Required to coordinate membrane tubulation with reorganization of the actin cytoskeleton during endocytosis. May bind to lipids such as phosphatidylinositol 4,5-bisphosphate and phosphatidylserine and promote membrane invagination and the formation of tubules. Also promotes CDC42-induced actin polymerization by activating the WASL/N-WASP-WASPIP/WIP complex, the predominant form of WASL/N-WASP in cells. Actin polymerization may promote the fission of membrane tubules to form endocytic vesicles. Essential for autophagy of intracellular bacterial pathogens. This is Formin-binding protein 1-like (FNBP1L) from Homo sapiens (Human).